We begin with the raw amino-acid sequence, 61 residues long: uncharacterized protein (61 aa).

A coiled-coil region spans residues 24 to 60; that stretch reads WMRYESERDEKLRMLERMRDELEAELEEIKREIERLR.

This is an uncharacterized protein from Archaeoglobus fulgidus (strain ATCC 49558 / DSM 4304 / JCM 9628 / NBRC 100126 / VC-16).